Consider the following 453-residue polypeptide: MTTDTIVAQATAPGRGGVGIIRVSGDLASNVAMAVLGHIPKTRYADYCDFKEDSGEVIDQGIALFFKGPNSFTGEDVLELQGHGGQIVLDMLIKRVMEVDGLRIAKPGEFSEQAFMNDKLDLTQAEAIADLIDATSEQAAKSALNSLQGEFSTQVHDLVEKVTNLRLYVEAAIDFPDEEVDFLSDGKIAASLNGIIGKLDGVQASAKQGSIIREGMKVVIAGRPNAGKSSLLNALAGKESAIVTEIAGTTRDVLREHIHLDGMPLHIIDTAGLRDTADTVEKIGIERAWDEIRTADRVLFMVDGTTTPAVDPHEIWPDFIDRLPNNLGVTVVRNKADLTGEDLAITTEAGHSVYRISAKTGLGVDDLKQHLKSLMGYQSNLEGGFIARRRHLEALDLASSHLLLGKEQLEVYQAGELLAEELRMCQMALSEITGKFTSDDLLGKIFSSFCIGK.

Arg22, Glu79, and Lys119 together coordinate (6S)-5-formyl-5,6,7,8-tetrahydrofolate. The 162-residue stretch at 215-376 (GMKVVIAGRP…LKQHLKSLMG (162 aa)) folds into the TrmE-type G domain. Asn225 is a binding site for K(+). GTP contacts are provided by residues 225–230 (NAGKSS), 244–250 (TEIAGTT), 269–272 (DTAG), and 334–337 (NKAD). Ser229 serves as a coordination point for Mg(2+). Residues Thr244, Ile246, and Thr249 each contribute to the K(+) site. Residue Thr250 participates in Mg(2+) binding. Lys453 is a binding site for (6S)-5-formyl-5,6,7,8-tetrahydrofolate.

The protein belongs to the TRAFAC class TrmE-Era-EngA-EngB-Septin-like GTPase superfamily. TrmE GTPase family. Homodimer. Heterotetramer of two MnmE and two MnmG subunits. Requires K(+) as cofactor.

The protein localises to the cytoplasm. In terms of biological role, exhibits a very high intrinsic GTPase hydrolysis rate. Involved in the addition of a carboxymethylaminomethyl (cmnm) group at the wobble position (U34) of certain tRNAs, forming tRNA-cmnm(5)s(2)U34. In Shewanella halifaxensis (strain HAW-EB4), this protein is tRNA modification GTPase MnmE.